A 950-amino-acid polypeptide reads, in one-letter code: MMKDYYTWTYPDIPENVSQELRQLKSSLVVVGIVGRSKCDQANKMQAFGMEPPIEHKAKEGQVQCYYKLGTSSLLLHFETTYDEAILGQMIDVCMEDVETPFDFDSFYERMRCRFVRMMLLALHACHIVVYVETGQTFDPTLVTVFQLLKFAREQHLMQFLPQMLRETPSARMSERARLCAPRILFLFENFPRDEPKTRECVSAYEFQTEDCIYELLRHHNIVTNSSSSSLVALPNNKQFVFFNAHEQLHEDKLLKAIDCLNQAMYKPDAKEEEEDLEILELAPFEGFVKPYNLPVDDKELEKQQYKQDHTVWHFLQRHVQDALLGCFDEGSFKQHSQQGQFQLLNIHEWHNYMATLHKLLVENAKDPNQETSNEDYKLFLKSFDESLNYEKKFWAHLCELGLKKGIAAYKNAAPANYGNSTHRQLLADATVAFEEEGRGPQAKAALAKMAAICQKHWQDGRQQCEQLSLRSHPCTLPKNLPHEKHNSGVIHISSCNCGRTQGRREDPFNLRQANYEFYEHIAQMCNLCVKVKQYQLPIFEPSVSDYRAAAFEAAFPLLHTGKSGAPQDEDGEEDAEDEEGQEQQQPAEEQRQNTASNGCSQPLSPTFGSDLNMSIAGFGASLNESQASSEQLSNSEQNSTSSGTSSADTENELVVELQELHAKKEARDDAGPADAFSTSTTEYLPGLVHTVSNFGLLPLFPSWSLACVGPSSIYSHNTGLQEHFQSGFLSGANFLLPWDVQLRLVHAPKQQHHTHHQQQHLGKKQQRWKKQGDRLSLKIFVGMEYECSRGHRFMMCAPDRVLRGGADIERETCSKVVHNNMPLYYPCPCRSQTSYLAQLMRIHVVTPKAPVNIIVDPKVCVGKGKYTFTLGSIVPPRLSQSAYWIIRLPYVYQGDDVLIAPPEKLEPDDPLAGGYLLPGMFGVAETDPTLDLNEPGRMGASAAGNFTRI.

Disordered stretches follow at residues 560-607 (HTGK…LSPT) and 624-651 (NESQ…ADTE). Residues 568 to 582 (QDEDGEEDAEDEEGQ) are compositionally biased toward acidic residues. The span at 593–607 (QNTASNGCSQPLSPT) shows a compositional bias: polar residues. Low complexity predominate over residues 624–648 (NESQASSEQLSNSEQNSTSSGTSSA).

It belongs to the SMG8 family.

In terms of biological role, involved in nonsense-mediated decay (NMD) of mRNAs containing premature stop codons. Probable component of kinase complex containing nonC and recruited to stalled ribosomes. This is Nonsense-mediated mRNA decay factor SMG8 from Drosophila yakuba (Fruit fly).